We begin with the raw amino-acid sequence, 236 residues long: V-set and transmembrane domain-containing protein 2A (236 aa).

Residues 1-24 (MMGIFLVYVGFVFFSVLYVQQGLS) form the signal peptide. In terms of domain architecture, Ig-like V-type spans 27 to 143 (AKFTEFPRNV…YGELQEHKAQ (117 aa)). Asn35 carries an N-linked (GlcNAc...) asparagine glycan. A disulfide bond links Cys48 and Cys127. Asn175 carries N-linked (GlcNAc...) asparagine glycosylation. Residues 184-199 (IHGSANQRTHSTSSPQ) show a composition bias toward polar residues. Residues 184 to 206 (IHGSANQRTHSTSSPQVVAKIPK) are disordered.

In terms of assembly, homodimer. N-glycosylated. N-linked glycosylation is critical for secretion but not for preadipocyte cell differentiation activity.

It is found in the secreted. Its function is as follows. Plays a role in the regulation of the early stage of white and brown preadipocyte cell differentiation. Promotes adipogenic commitment of preadipocytes by increasing gene expression of the transcription factor PPARG in a BMP4-dependent signaling pathway. This Homo sapiens (Human) protein is V-set and transmembrane domain-containing protein 2A.